The chain runs to 447 residues: Peptide chain release factor 1, mitochondrial (447 aa).

Residues 1–63 (MNRRHLFAWL…LLNKNCSRRY (63 aa)) constitute a mitochondrion transit peptide. Positions 299 to 363 (PKDLRIDTFR…LRARLYQQII (65 aa)) are GGQ domain. Positions 313–315 (GGQ) match the GGQ motif. The residue at position 315 (Gln315) is an N5-methylglutamine.

Belongs to the prokaryotic/mitochondrial release factor family. Methylation of glutamine in the GGQ triplet by HEMK1 is conserved from bacteria to mammals.

It localises to the mitochondrion. In terms of biological role, mitochondrial peptide chain release factor that directs the termination of translation in response to the peptide chain non-canonical stop codons AGG and AGA. Non-canonical termination codons AGG and AGA are found at the end of MT-CO1/COX1 and MT-ND6/ND6 open reading frames, respectively. Recognizes non-canonical stop codons via a network of interactions between the codon, MTRF1 and the ribosomal RNA (rRNA): in contrast to other translation release factors, which identify the codon in the A-site via direct interactions of amino acid side chains with the bases, MTRF1 repositions the first 2 bases of the stop codon to use an intricate network of interactions that includes residues of the release factor, the rRNA of the small ribosomal subunit, as well as neighboring bases of the mRNA. The protein is Peptide chain release factor 1, mitochondrial (MTRF1) of Bos taurus (Bovine).